The chain runs to 112 residues: Cryptic phage CTXphi transcriptional repressor RstR (112 aa).

Residues 7 to 61 (LANQRKAINKTQAQMADEIGISLTSYKKYESGEGLPTMENLVKIADALEISIDEL) form the HTH cro/C1-type domain. The segment at residues 18–37 (QAQMADEIGISLTSYKKYES) is a DNA-binding region (H-T-H motif).

Functionally, transcriptional repressor of the integrated CTXPhi phage gene rstA2. This Vibrio cholerae serotype O1 (strain ATCC 39315 / El Tor Inaba N16961) protein is Cryptic phage CTXphi transcriptional repressor RstR (rstR1).